Here is a 337-residue protein sequence, read N- to C-terminus: Anthranilate phosphoribosyltransferase (337 aa).

Residues Gly81, 84-85 (GD), Ser89, 91-94 (NVST), 109-117 (KHGNRALSS), and Ala121 contribute to the 5-phospho-alpha-D-ribose 1-diphosphate site. Residue Gly81 coordinates anthranilate. Ser93 is a Mg(2+) binding site. Anthranilate is bound at residue Asn112. Arg167 is an anthranilate binding site. Residues Asp226 and Glu227 each contribute to the Mg(2+) site.

The protein belongs to the anthranilate phosphoribosyltransferase family. As to quaternary structure, homodimer. It depends on Mg(2+) as a cofactor.

It carries out the reaction N-(5-phospho-beta-D-ribosyl)anthranilate + diphosphate = 5-phospho-alpha-D-ribose 1-diphosphate + anthranilate. It functions in the pathway amino-acid biosynthesis; L-tryptophan biosynthesis; L-tryptophan from chorismate: step 2/5. Functionally, catalyzes the transfer of the phosphoribosyl group of 5-phosphorylribose-1-pyrophosphate (PRPP) to anthranilate to yield N-(5'-phosphoribosyl)-anthranilate (PRA). This Bradyrhizobium sp. (strain ORS 278) protein is Anthranilate phosphoribosyltransferase.